The chain runs to 1415 residues: Uveal autoantigen with coiled-coil domains and ankyrin repeats (1415 aa).

ANK repeat units lie at residues 69–98 (EGRS…DITT), 102–131 (AGRN…PTEH), 135–164 (QGRT…SVNA), 168–197 (DGRT…EINS), and 201–230 (QNRT…DVSL). Positions 288–376 (VKSSQREHRN…TIESLKNRFK (89 aa)) form a coiled coil. Residues 617 to 646 (ELLAKLTLSVPTEKFESMKSLLSSEVNEKV) form an ANK 6 repeat. The stretch at 759-1381 (TVEELKKQLL…TDRQHQEVIA (623 aa)) forms a coiled coil. Lys-1034 participates in a covalent cross-link: Glycyl lysine isopeptide (Lys-Gly) (interchain with G-Cter in SUMO2). The segment covering 1186-1201 (LREKEEESQNKTEEVS) has biased composition (basic and acidic residues). Positions 1186-1205 (LREKEEESQNKTEEVSKLQS) are disordered.

Component of the apoptosome complex, composed of APAF1, pro-caspase-9 and UACA. In the complex, it probably interacts directly with APAF1. Interacts with LGALS3, ARF6 and ACTB. Interacts with RAB39A. In terms of tissue distribution, highly expressed in adrenal, testis, kidney and large intestine.

It is found in the nucleus. It localises to the cytoplasm. Its subcellular location is the cytoskeleton. In terms of biological role, regulates APAF1 expression and plays an important role in the regulation of stress-induced apoptosis. Promotes apoptosis by regulating three pathways, apoptosome up-regulation, LGALS3/galectin-3 down-regulation and NF-kappa-B inactivation. Regulates the redistribution of APAF1 into the nucleus after proapoptotic stress. Down-regulates the expression of LGALS3 by inhibiting NFKB1. Its function is as follows. Modulates isoactin dynamics to regulate the morphological alterations required for cell growth and motility. Interaction with ARF6 may modulate cell shape and motility after injury. May be involved in multiple neurite formation. The polypeptide is Uveal autoantigen with coiled-coil domains and ankyrin repeats (UACA) (Canis lupus familiaris (Dog)).